Reading from the N-terminus, the 134-residue chain is Small ribosomal subunit protein eS24A (134 aa).

Residue Ser-2 is modified to N-acetylserine. The tract at residues 100–134 is disordered; it reads IQKVARQQRKQRKNRGKKVFGTGKRLAKRKSKQQD. 2 stretches are compositionally biased toward basic residues: residues 105-117 and 124-134; these read RQQR…RGKK and RLAKRKSKQQD.

Belongs to the eukaryotic ribosomal protein eS24 family. As to quaternary structure, component of the small ribosomal subunit (SSU). Mature yeast ribosomes consist of a small (40S) and a large (60S) subunit. The 40S small subunit contains 1 molecule of ribosomal RNA (18S rRNA) and at least 33 different proteins. The large 60S subunit contains 3 rRNA molecules (25S, 5.8S and 5S rRNA) and at least 46 different proteins.

It localises to the cytoplasm. In terms of biological role, component of the ribosome, a large ribonucleoprotein complex responsible for the synthesis of proteins in the cell. The small ribosomal subunit (SSU) binds messenger RNAs (mRNAs) and translates the encoded message by selecting cognate aminoacyl-transfer RNA (tRNA) molecules. The large subunit (LSU) contains the ribosomal catalytic site termed the peptidyl transferase center (PTC), which catalyzes the formation of peptide bonds, thereby polymerizing the amino acids delivered by tRNAs into a polypeptide chain. The nascent polypeptides leave the ribosome through a tunnel in the LSU and interact with protein factors that function in enzymatic processing, targeting, and the membrane insertion of nascent chains at the exit of the ribosomal tunnel. In Schizosaccharomyces pombe (strain 972 / ATCC 24843) (Fission yeast), this protein is Small ribosomal subunit protein eS24A (rps2401).